The primary structure comprises 593 residues: UvrABC system protein C (593 aa).

Positions 14–91 (DSPGCYLHKD…IQENMPKYNI (78 aa)) constitute a GIY-YIG domain. Residues 196–231 (NKIVNGLTEKMKSAAMTMEFERAAEYRDLIEAISLL) enclose the UVR domain.

Belongs to the UvrC family. Interacts with UvrB in an incision complex.

It localises to the cytoplasm. Functionally, the UvrABC repair system catalyzes the recognition and processing of DNA lesions. UvrC both incises the 5' and 3' sides of the lesion. The N-terminal half is responsible for the 3' incision and the C-terminal half is responsible for the 5' incision. The polypeptide is UvrABC system protein C (Streptococcus agalactiae serotype III (strain NEM316)).